The following is an 81-amino-acid chain: Cell division protein ZapB (81 aa).

A coiled-coil region spans residues 5–81; that stretch reads LEVFEKLEAK…QALLGRMEEV (77 aa). K10 carries the N6-acetyllysine modification. The interval 36-67 is disordered; the sequence is NNSLSQEVQNAQHQREELERENNHLKEQQNGW. The segment covering 37–47 has biased composition (polar residues); that stretch reads NSLSQEVQNAQ. Residues 48–62 show a composition bias toward basic and acidic residues; the sequence is HQREELERENNHLKE.

Belongs to the ZapB family. Homodimer. The ends of the coiled-coil dimer bind to each other, forming polymers. Interacts with FtsZ.

It localises to the cytoplasm. Its function is as follows. Non-essential, abundant cell division factor that is required for proper Z-ring formation. It is recruited early to the divisome by direct interaction with FtsZ, stimulating Z-ring assembly and thereby promoting cell division earlier in the cell cycle. Its recruitment to the Z-ring requires functional FtsA or ZipA. The chain is Cell division protein ZapB from Shigella boydii serotype 4 (strain Sb227).